The chain runs to 215 residues: Interleukin-12 subunit alpha (215 aa).

Residues 1 to 22 (MCSSRCLLFLATLAFLIHLSLA) form the signal peptide. Intrachain disulfides connect Cys-33-Cys-106, Cys-60-Cys-192, and Cys-81-Cys-119. N-linked (GlcNAc...) asparagine glycosylation occurs at Asn-89.

The protein belongs to the IL-6 superfamily. As to quaternary structure, heterodimer with IL12B; disulfide-linked. This heterodimer is known as interleukin IL-12. Heterodimer with EBI3/IL27B; not disulfide-linked. This heterodimer is known as interleukin IL-35. Interacts with NBR1; this interaction promotes IL-12 secretion.

The protein localises to the secreted. In terms of biological role, heterodimerizes with IL12B to form the IL-12 cytokine or with EBI3/IL27B to form the IL-35 cytokine. IL-12 is primarily produced by professional antigen-presenting cells (APCs) such as B-cells and dendritic cells (DCs) as well as macrophages and granulocytes and regulates T-cell and natural killer-cell responses, induces the production of interferon-gamma (IFN-gamma), favors the differentiation of T-helper 1 (Th1) cells and is an important link between innate resistance and adaptive immunity. Mechanistically, exerts its biological effects through a receptor composed of IL12R1 and IL12R2 subunits. Binding to the receptor results in the rapid tyrosine phosphorylation of a number of cellular substrates including the JAK family kinases TYK2 and JAK2. In turn, recruited STAT4 gets phosphorylated and translocates to the nucleus where it regulates cytokine/growth factor responsive genes. As part of IL-35, plays essential roles in maintaining the immune homeostasis of the liver microenvironment and also functions as an immune-suppressive cytokine. Mediates biological events through unconventional receptors composed of IL12RB2 and gp130/IL6ST heterodimers or homodimers. Signaling requires the transcription factors STAT1 and STAT4, which form a unique heterodimer that binds to distinct DNA sites. The chain is Interleukin-12 subunit alpha (IL12A) from Sigmodon hispidus (Hispid cotton rat).